The primary structure comprises 167 residues: Translation initiation factor IF-3 (167 aa).

This sequence belongs to the IF-3 family. Monomer.

The protein localises to the cytoplasm. IF-3 binds to the 30S ribosomal subunit and shifts the equilibrium between 70S ribosomes and their 50S and 30S subunits in favor of the free subunits, thus enhancing the availability of 30S subunits on which protein synthesis initiation begins. The chain is Translation initiation factor IF-3 from Bacillus anthracis.